A 937-amino-acid chain; its full sequence is Isoleucine--tRNA ligase (937 aa).

The 'HIGH' region motif lies at 58–68 (PYANGSIHIGH). Glu561 provides a ligand contact to L-isoleucyl-5'-AMP. The 'KMSKS' region motif lies at 602–606 (KMSKS). Lys605 contributes to the ATP binding site. Zn(2+) contacts are provided by Cys900, Cys903, Cys920, and Cys923.

Belongs to the class-I aminoacyl-tRNA synthetase family. IleS type 1 subfamily. In terms of assembly, monomer. Zn(2+) is required as a cofactor.

It localises to the cytoplasm. It catalyses the reaction tRNA(Ile) + L-isoleucine + ATP = L-isoleucyl-tRNA(Ile) + AMP + diphosphate. In terms of biological role, catalyzes the attachment of isoleucine to tRNA(Ile). As IleRS can inadvertently accommodate and process structurally similar amino acids such as valine, to avoid such errors it has two additional distinct tRNA(Ile)-dependent editing activities. One activity is designated as 'pretransfer' editing and involves the hydrolysis of activated Val-AMP. The other activity is designated 'posttransfer' editing and involves deacylation of mischarged Val-tRNA(Ile). This chain is Isoleucine--tRNA ligase, found in Photorhabdus laumondii subsp. laumondii (strain DSM 15139 / CIP 105565 / TT01) (Photorhabdus luminescens subsp. laumondii).